A 199-amino-acid polypeptide reads, in one-letter code: Transcriptional regulatory protein DesR (199 aa).

The Response regulatory domain occupies 3-117 (SIFIAEDQQM…ELANAIRSVM (115 aa)). At Asp-54 the chain carries 4-aspartylphosphate. The region spanning 131–196 (LYSEANPLTD…EAITRSKEKG (66 aa)) is the HTH luxR-type domain. A DNA-binding region (H-T-H motif) is located at residues 155-174 (TKEIAQELSIKSGTVRNYIS).

Post-translationally, phosphorylated by DesK.

Its subcellular location is the cytoplasm. Functionally, member of the two-component regulatory system DesR/DesK, responsible for cold induction of the des gene coding for the Delta5 acyl-lipid desaturase. The sequence is that of Transcriptional regulatory protein DesR (desR) from Bacillus subtilis (strain 168).